The chain runs to 184 residues: Female-specific protein transformer (184 aa).

Composition is skewed to basic and acidic residues over residues 1 to 39 (MKMD…DSRK) and 49 to 58 (DEVREQDRIR). Disordered stretches follow at residues 1-123 (MKMD…PKII) and 146-184 (YQRL…RPPY). 2 stretches are compositionally biased toward basic residues: residues 59-75 (SLRQ…RSRS) and 84-114 (SRHR…RSPH). A compositionally biased stretch (pro residues) spans 150-159 (PRPPPFPPAP).

Its subcellular location is the nucleus speckle. In terms of biological role, member of the regulatory pathway controlling female somatic sexual differentiation, regulated by Sxl. Activates dsx female-specific splicing by promoting the formation of a splicing enhancer complex which consists of tra, tra2 and sr proteins. The protein is Female-specific protein transformer (tra) of Drosophila simulans (Fruit fly).